Reading from the N-terminus, the 393-residue chain is S-adenosylmethionine synthase 3 (393 aa).

Glu43 is a binding site for K(+). Residues Glu56 and Gln99 each coordinate L-methionine. ATP is bound by residues 167-169 (DGK), 235-238 (SGRF), Asp246, 252-253 (RK), Ala269, Lys273, and Lys277. L-methionine is bound at residue Asp246. An L-methionine-binding site is contributed by Lys277.

The protein belongs to the AdoMet synthase family. In terms of assembly, homotetramer. The cofactor is Mn(2+). It depends on Mg(2+) as a cofactor. Co(2+) serves as cofactor. K(+) is required as a cofactor.

Its subcellular location is the cytoplasm. The catalysed reaction is L-methionine + ATP + H2O = S-adenosyl-L-methionine + phosphate + diphosphate. Its pathway is amino-acid biosynthesis; S-adenosyl-L-methionine biosynthesis; S-adenosyl-L-methionine from L-methionine: step 1/1. Catalyzes the formation of S-adenosylmethionine from methionine and ATP. The reaction comprises two steps that are both catalyzed by the same enzyme: formation of S-adenosylmethionine (AdoMet) and triphosphate, and subsequent hydrolysis of the triphosphate. This is S-adenosylmethionine synthase 3 (SAM3) from Actinidia chinensis var. chinensis (Chinese soft-hair kiwi).